We begin with the raw amino-acid sequence, 337 residues long: Molybdate import system permease protein MolB (337 aa).

At 1–5 the chain is on the cytoplasmic side; it reads MQPDS. The chain crosses the membrane as a helical span at residues 6 to 25; it reads YPKILFGLTLLLVITAVISL. The Periplasmic segment spans residues 26–51; the sequence is GIGRYSLSVPQIGQILWAKATALEID. The chain crosses the membrane as a helical span at residues 52 to 87; it reads PVQQQVIFQVRLPRILTALCVGAGLALSGVVLQGIF. Residues 88–98 lie on the Cytoplasmic side of the membrane; the sequence is RNPLVNPHIIG. A helical transmembrane segment spans residues 99 to 113; the sequence is VTSGSAFGGTLAIFF. Topologically, residues 114 to 116 are periplasmic; that stretch reads GFS. Residues 117-140 traverse the membrane as a helical segment; that stretch reads LYGLFTSTILFGFGTLALVFLFSF. Residues 141-146 lie on the Cytoplasmic side of the membrane; it reads KFNQRS. The chain crosses the membrane as a helical span at residues 147–171; it reads LLMLILIGMILSGLFSALVSLLQYI. Residues 172-193 lie on the Periplasmic side of the membrane; the sequence is SDTEEKLPSIVFWLMGSFATSN. The chain crosses the membrane as a helical span at residues 194–214; sequence WEKLLFFFVPFLLCSSILLSL. Residues 215-234 are Cytoplasmic-facing; sequence SWRLNLLSLDEKEAKALGVK. The chain crosses the membrane as a helical span at residues 235-257; sequence MAPLRWLVIFLSGSLVACQVAIS. Residues 258–264 lie on the Periplasmic side of the membrane; the sequence is GSIGWVG. A helical membrane pass occupies residues 265–275; it reads LIIPHLSRMLV. Over 276 to 278 the chain is Cytoplasmic; that stretch reads GAN. Residues 279-304 traverse the membrane as a helical segment; that stretch reads HQSLLPCTMLVGATYMLLVDNVARSL. At 305-310 the chain is on the periplasmic side; the sequence is SDAEIP. A helical transmembrane segment spans residues 311-329; sequence ISILTALIGAPLFGVLVYK. The Cytoplasmic segment spans residues 330-337; it reads LKRGGMNE.

Belongs to the binding-protein-dependent transport system permease family. FecCD subfamily. In terms of assembly, the complex is composed of two ATP-binding proteins (MolC), two transmembrane proteins (MolB) and a solute-binding protein (MolA).

The protein localises to the cell inner membrane. With respect to regulation, the MolBCA complex shows a decrease in affinity in the presence of increasing concentrations of substrate and nucleotide. Part of the ABC transporter complex MolBCA involved in molybdate import. Responsible for the translocation of the substrate across the membrane. Functions as a low-affinity molybdate transporter. The sequence is that of Molybdate import system permease protein MolB from Haemophilus influenzae (strain ATCC 51907 / DSM 11121 / KW20 / Rd).